A 557-amino-acid chain; its full sequence is T-complex protein 1 subunit eta (557 aa).

At Ala2 the chain carries N-acetylalanine. Residues 529–557 are disordered; it reads PKSESAQGDAAGAMGRGRGGGRGRGMRRR. Residues 547 to 557 show a composition bias toward basic residues; the sequence is GGGRGRGMRRR.

It belongs to the TCP-1 chaperonin family. In terms of assembly, heterooligomeric complex of about 850 to 900 kDa that forms two stacked rings, 12 to 16 nm in diameter. Interacts with KNAT1.

The protein resides in the cytoplasm. Molecular chaperone; assists the folding of proteins upon ATP hydrolysis. Known to play a role, in vitro, in the folding of actin and tubulin. The protein is T-complex protein 1 subunit eta of Arabidopsis thaliana (Mouse-ear cress).